Here is a 224-residue protein sequence, read N- to C-terminus: Small ribosomal subunit protein uS3 (224 aa).

The KH type-2 domain maps to Ile-39 to Lys-107.

The protein belongs to the universal ribosomal protein uS3 family. Part of the 30S ribosomal subunit. Forms a tight complex with proteins S10 and S14.

Functionally, binds the lower part of the 30S subunit head. Binds mRNA in the 70S ribosome, positioning it for translation. The polypeptide is Small ribosomal subunit protein uS3 (Chlamydia trachomatis serovar D (strain ATCC VR-885 / DSM 19411 / UW-3/Cx)).